The sequence spans 492 residues: ERAD-associated E3 ubiquitin-protein ligase HRD1A (492 aa).

Residues 1 to 3 are Cytoplasmic-facing; the sequence is MIR. Residues 4-24 traverse the membrane as a helical segment; that stretch reads LRTYAGLSFMATLAVIYHAFS. Topologically, residues 25–40 are lumenal; it reads SRGQFYPATVYLSTSK. Residues 41–61 traverse the membrane as a helical segment; sequence ISLVLLLNMCLVLMLSLWHLV. The Cytoplasmic portion of the chain corresponds to 62-98; the sequence is KFVFLGSLREAEVERLNEQAWRELMEILFAITIFRQD. A helical transmembrane segment spans residues 99–119; sequence FSSGFLPLVVTLLLIKALHWL. The Lumenal segment spans residues 120 to 135; the sequence is AQKRVEYIETTPSVSK. The helical transmembrane segment at 136–156 threads the bilayer; it reads LSHFRIVSFMGFLLLVDSLFM. Over 157–170 the chain is Cytoplasmic; that stretch reads YSSIRHLIQSRQAS. The helical transmembrane segment at 171–191 threads the bilayer; the sequence is VSLFFSFEYMILATTTVAIFV. At 192–221 the chain is on the lumenal side; that stretch reads KYVFYVTDMLMDGQWEKKPVYTFYLELIRD. Residues 222–242 traverse the membrane as a helical segment; sequence LLHLSMYICFFFVIFMNYGVP. Residues 243-492 are Cytoplasmic-facing; it reads LHLLRELYET…KGKSVADAAE (250 aa). The RING-type; atypical zinc finger occupies 292 to 330; sequence CIICREEMTNAKKLICGHLFHVHCLRSWLERQQTCPTCR. Disordered stretches follow at residues 339–379 and 470–492; these read ATSA…NSLS and ETRK…DAAE. Residues 351 to 378 show a composition bias toward low complexity; the sequence is QGSQQGTSSSGNQGSEISSSAGVSNNSL. Residues 470 to 486 show a composition bias toward basic and acidic residues; sequence ETRKPESAGEPENKGKS.

Belongs to the HRD1 family.

The protein localises to the endoplasmic reticulum membrane. It carries out the reaction S-ubiquitinyl-[E2 ubiquitin-conjugating enzyme]-L-cysteine + [acceptor protein]-L-lysine = [E2 ubiquitin-conjugating enzyme]-L-cysteine + N(6)-ubiquitinyl-[acceptor protein]-L-lysine.. Its pathway is protein modification; protein ubiquitination. In terms of biological role, probable component of the HRD1 ubiquitin ligase complex that mediates the rapid degradation of misfolded endoplasmic reticulum (ER) proteins, a process called ER-associated degradation (ERAD). Targets the misfolded LRR receptor kinase BRI1. Functions redundantly with HRD3B. In Arabidopsis thaliana (Mouse-ear cress), this protein is ERAD-associated E3 ubiquitin-protein ligase HRD1A.